The primary structure comprises 541 residues: MINKFLTIFLIFSIVIIKVLSQSSNEQPLNVVPYPQEVTMIGCNIPLSVGSISIKSNIESTILSISISRYQSLFFPFVSNNVLKDSSSNIELSLIIASDDETLELGIDESYFLLVNQDTYQIKANTIYGAMRGLETFKQMVVYDVVENSYSLTCAEVVDYPTYQWRGLLVDNARHFLPKNMVLHIIDSMGYNKFNTMHWHLIDTVAFPVESKTYPKLTEALLGPGAIITHDDILEVVAYAKTYGIRVIPEFDVPGHSASWGVGYPELLSNCPGYPQSSIPLDCSNPYTYSFLENFFSEIAPLFQDSYFHTGGDELVIDCWANDTSIQKWMKTNNYNTSDAFQYFEDQLDVILKSINRTKIAWNDVLQHGVKFDKETTLVQTWTNINDLRDVLAAGYKTITSFFFYLDRQSPTGNHYHYEWQDTWEDFYASDPRLNITSNAENILGGEATMFGEQVSTVNWDARVWPRAIGISERLWSATEINNITLALPRIGQFSCDMSRRGISSGPLFPDFCSLPDDLSFSFKPVYQLSKDEIKLILKKK.

An N-terminal signal peptide occupies residues 1 to 21 (MINKFLTIFLIFSIVIIKVLS). E314 acts as the Proton donor in catalysis. N-linked (GlcNAc...) asparagine glycans are attached at residues N322, N336, N356, N435, and N483.

Belongs to the glycosyl hydrolase 20 family.

Its subcellular location is the lysosome. It carries out the reaction Hydrolysis of terminal non-reducing N-acetyl-D-hexosamine residues in N-acetyl-beta-D-hexosaminides.. Its function is as follows. Responsible for the degradation of GM2 gangliosides, and a variety of other molecules containing terminal N-acetyl hexosamines. The protein is Beta-hexosaminidase subunit A2 (hexa2) of Dictyostelium discoideum (Social amoeba).